The primary structure comprises 181 residues: UPF0340 protein OB2986 (181 aa).

It belongs to the UPF0340 family.

The sequence is that of UPF0340 protein OB2986 from Oceanobacillus iheyensis (strain DSM 14371 / CIP 107618 / JCM 11309 / KCTC 3954 / HTE831).